The following is a 149-amino-acid chain: MSTNICSFKDRCVSILCCKFCKQVLSSRGMKAVLLADTEIDLFSTDIPPTNAVDFTGRCYFTKICKCKLKDIACLKCGNIVGYHVIVPCSSCLPSCNNGHFWMFHSQAVYDINRLDSTGVNILLWGNLPEIEESTDEDVLNISAEECIR.

Belongs to the FAM72 family.

This Homo sapiens (Human) protein is Protein FAM72B (FAM72B).